Here is a 126-residue protein sequence, read N- to C-terminus: Large ribosomal subunit protein bL17 (126 aa).

It belongs to the bacterial ribosomal protein bL17 family. As to quaternary structure, part of the 50S ribosomal subunit. Contacts protein L32.

The protein is Large ribosomal subunit protein bL17 of Lysinibacillus sphaericus (strain C3-41).